The primary structure comprises 126 residues: Protein translocase subunit SecE (126 aa).

3 helical membrane passes run Trp20–Met40, Val42–Thr62, and Ile97–Val117.

It belongs to the SecE/SEC61-gamma family. Component of the Sec protein translocase complex. Heterotrimer consisting of SecY, SecE and SecG subunits. The heterotrimers can form oligomers, although 1 heterotrimer is thought to be able to translocate proteins. Interacts with the ribosome. Interacts with SecDF, and other proteins may be involved. Interacts with SecA.

It localises to the cell inner membrane. Essential subunit of the Sec protein translocation channel SecYEG. Clamps together the 2 halves of SecY. May contact the channel plug during translocation. The polypeptide is Protein translocase subunit SecE (Vibrio alginolyticus).